Reading from the N-terminus, the 349-residue chain is Small ribosomal subunit protein uS2 (349 aa).

The segment at 302-334 (QNNYDPSKRGYNPKYVNHKSTFNKFNNKKPVDS) is disordered.

Belongs to the universal ribosomal protein uS2 family.

In Ureaplasma parvum serovar 3 (strain ATCC 27815 / 27 / NCTC 11736), this protein is Small ribosomal subunit protein uS2.